The sequence spans 529 residues: Bifunctional purine biosynthesis protein PurH (529 aa).

Residues 1–148 (MQQPRPVRRA…KNHKDVAIVV (148 aa)) enclose the MGS-like domain.

The protein belongs to the PurH family.

It carries out the reaction (6R)-10-formyltetrahydrofolate + 5-amino-1-(5-phospho-beta-D-ribosyl)imidazole-4-carboxamide = 5-formamido-1-(5-phospho-D-ribosyl)imidazole-4-carboxamide + (6S)-5,6,7,8-tetrahydrofolate. It catalyses the reaction IMP + H2O = 5-formamido-1-(5-phospho-D-ribosyl)imidazole-4-carboxamide. Its pathway is purine metabolism; IMP biosynthesis via de novo pathway; 5-formamido-1-(5-phospho-D-ribosyl)imidazole-4-carboxamide from 5-amino-1-(5-phospho-D-ribosyl)imidazole-4-carboxamide (10-formyl THF route): step 1/1. It functions in the pathway purine metabolism; IMP biosynthesis via de novo pathway; IMP from 5-formamido-1-(5-phospho-D-ribosyl)imidazole-4-carboxamide: step 1/1. The polypeptide is Bifunctional purine biosynthesis protein PurH (Cronobacter sakazakii (strain ATCC BAA-894) (Enterobacter sakazakii)).